An 82-amino-acid polypeptide reads, in one-letter code: Small ribosomal subunit protein bS16 (82 aa).

The protein belongs to the bacterial ribosomal protein bS16 family.

This Actinobacillus succinogenes (strain ATCC 55618 / DSM 22257 / CCUG 43843 / 130Z) protein is Small ribosomal subunit protein bS16.